A 396-amino-acid polypeptide reads, in one-letter code: Elongation factor Tu (396 aa).

Residues Lys-10–Val-206 enclose the tr-type G domain. The G1 stretch occupies residues Gly-19 to Thr-26. Gly-19–Thr-26 contributes to the GTP binding site. Thr-26 contributes to the Mg(2+) binding site. The interval Gly-62 to Asn-66 is G2. Residues Asp-83–Gly-86 are G3. Residues Asp-83–His-87 and Asn-138–Asp-141 contribute to the GTP site. The segment at Asn-138–Asp-141 is G4. Positions Ser-176–Leu-178 are G5.

It belongs to the TRAFAC class translation factor GTPase superfamily. Classic translation factor GTPase family. EF-Tu/EF-1A subfamily. As to quaternary structure, monomer.

The protein localises to the cytoplasm. The enzyme catalyses GTP + H2O = GDP + phosphate + H(+). In terms of biological role, GTP hydrolase that promotes the GTP-dependent binding of aminoacyl-tRNA to the A-site of ribosomes during protein biosynthesis. In Beutenbergia cavernae (strain ATCC BAA-8 / DSM 12333 / CCUG 43141 / JCM 11478 / NBRC 16432 / NCIMB 13614 / HKI 0122), this protein is Elongation factor Tu.